The primary structure comprises 141 residues: MAKKVENIVKLQIPAGKATPAPPVGPALGQAGINIMGFTKEFNARTADQAGMIIPVVISVYEDKSFDFVTKTPPAAVLLKKAAGVDKGSGEPNKTKVASVTRAQVQEIAETKMPDLNAANLESAMRMIEGTARSMGFTVTD.

The protein belongs to the universal ribosomal protein uL11 family. Part of the ribosomal stalk of the 50S ribosomal subunit. Interacts with L10 and the large rRNA to form the base of the stalk. L10 forms an elongated spine to which L12 dimers bind in a sequential fashion forming a multimeric L10(L12)X complex. One or more lysine residues are methylated.

Forms part of the ribosomal stalk which helps the ribosome interact with GTP-bound translation factors. This is Large ribosomal subunit protein uL11 from Streptococcus mutans serotype c (strain ATCC 700610 / UA159).